Consider the following 419-residue polypeptide: Octopressin receptor (419 aa).

The Extracellular segment spans residues 1 to 37; the sequence is MENFTEENLHPWITTTTRVYNNVTIFPQYDDELGKFE. 2 N-linked (GlcNAc...) asparagine glycosylation sites follow: Asn3 and Asn22. Residues 38-58 form a helical membrane-spanning segment; that stretch reads IMVLCILCFMALFGNAVVLIV. Residues 59-80 lie on the Cytoplasmic side of the membrane; the sequence is LRIKKTTLTRMQLLIVYLSVTD. Residues 81–101 traverse the membrane as a helical segment; it reads ISVALFHILPTIILKINVYFL. At 102–108 the chain is on the extracellular side; it reads GDISACR. Cys107 and Cys182 form a disulfide bridge. A helical transmembrane segment spans residues 109-129; sequence VYQFITVAELYASSFVLIVTA. Topologically, residues 130–153 are cytoplasmic; that stretch reads LDRYISICHPLAAHMWTNRRVHMT. A helical membrane pass occupies residues 154-174; that stretch reads TALALFLALMCSLPQLDAVLV. The Extracellular segment spans residues 175–192; it reads DFHGGKLCRPNLTTELAN. N-linked (GlcNAc...) asparagine glycosylation is present at Asn185. Residues 193-213 traverse the membrane as a helical segment; that stretch reads IAYSWWAFCSVFFVPLLLLIF. Topologically, residues 214–292 are cytoplasmic; that stretch reads FYGRICFVVW…VSKSKIKTIK (79 aa). The tract at residues 253-274 is disordered; sequence SQTSSENRVKNYSDARDKDSSR. Over residues 259–274 the composition is skewed to basic and acidic residues; that stretch reads NRVKNYSDARDKDSSR. A helical membrane pass occupies residues 293–313; the sequence is LTFSVVACFIICYTPFFTVLM. At 314-329 the chain is on the extracellular side; that stretch reads ARTYDAELSSAQTPAL. Residues 330-350 form a helical membrane-spanning segment; the sequence is VILSLLPSLNSCTNPWIYLAF. Residues 351–419 lie on the Cytoplasmic side of the membrane; the sequence is SGKVWCRQQS…TTALMSSSPC (69 aa).

It belongs to the G-protein coupled receptor 1 family. Vasopressin/oxytocin receptor subfamily. In terms of tissue distribution, present in the nervous system and peripheral tissues.

It is found in the cell membrane. Acts as a receptor for octopressin. The chain is Octopressin receptor from Octopus vulgaris (Common octopus).